We begin with the raw amino-acid sequence, 195 residues long: Insertion element IS136 uncharacterized protein Atu4601 (195 aa).

Positions Met25–Ser194 constitute an Integrase catalytic domain.

The sequence is that of Insertion element IS136 uncharacterized protein Atu4601 from Agrobacterium fabrum (strain C58 / ATCC 33970) (Agrobacterium tumefaciens (strain C58)).